The primary structure comprises 251 residues: uncharacterized protein (251 aa).

The first 19 residues, 1 to 19 (MRYLKRITIYISLLILVSG), serve as a signal peptide directing secretion. C20 carries N-palmitoyl cysteine lipidation. A lipid anchor (S-diacylglycerol cysteine) is attached at C20.

It belongs to the staphylococcal tandem lipoprotein family.

It localises to the cell membrane. This is an uncharacterized protein from Staphylococcus epidermidis (strain ATCC 12228 / FDA PCI 1200).